We begin with the raw amino-acid sequence, 424 residues long: Histidine--tRNA ligase (424 aa).

The protein belongs to the class-II aminoacyl-tRNA synthetase family. In terms of assembly, homodimer.

It localises to the cytoplasm. The catalysed reaction is tRNA(His) + L-histidine + ATP = L-histidyl-tRNA(His) + AMP + diphosphate + H(+). This chain is Histidine--tRNA ligase, found in Staphylococcus epidermidis (strain ATCC 12228 / FDA PCI 1200).